The sequence spans 450 residues: Phosphoglucosamine mutase (450 aa).

Serine 101 acts as the Phosphoserine intermediate in catalysis. Serine 101, aspartate 240, aspartate 242, and aspartate 244 together coordinate Mg(2+). Serine 101 carries the phosphoserine modification.

It belongs to the phosphohexose mutase family. It depends on Mg(2+) as a cofactor. Activated by phosphorylation.

The catalysed reaction is alpha-D-glucosamine 1-phosphate = D-glucosamine 6-phosphate. Its function is as follows. Catalyzes the conversion of glucosamine-6-phosphate to glucosamine-1-phosphate. This is Phosphoglucosamine mutase from Streptococcus pneumoniae (strain JJA).